A 338-amino-acid polypeptide reads, in one-letter code: Bacteriochlorophyllide d C-20 methyltransferase (338 aa).

Glutamate 147 is an S-adenosyl-L-methionine binding site. Histidine 150 provides a ligand contact to substrate. S-adenosyl-L-methionine-binding positions include glycine 177, asparagine 200, 227–228 (DI), and 242–243 (CR). Tyrosine 246 (nucleophile) is an active-site residue. Histidine 290 provides a ligand contact to a bacteriochlorophyll d.

Belongs to the class I-like SAM-binding methyltransferase superfamily. Cation-independent O-methyltransferase family. As to quaternary structure, homodimer.

It carries out the reaction a bacteriochlorophyllide d + S-adenosyl-L-methionine = a bacteriochlorophyllide c + S-adenosyl-L-homocysteine + H(+). It participates in porphyrin-containing compound metabolism; bacteriochlorophyll biosynthesis (light-independent). In terms of biological role, involved in the biosynthesis of the major light-harvesting pigment bacteriochlorophyll c (BChlc), which confers a significant competitive advantage to green sulfur bacteria living at limiting red and near-infrared light intensities. Catalyzes the methylation at the C-20 position of the cyclic tetrapyrrole chlorin of bacteriochlorophyll d (BChld) to produce bacteriochlorophyll c (BChlc) using S-adenosylmethionine (SAM) as a methyl source. In Chlorobaculum tepidum (strain ATCC 49652 / DSM 12025 / NBRC 103806 / TLS) (Chlorobium tepidum), this protein is Bacteriochlorophyllide d C-20 methyltransferase.